A 378-amino-acid polypeptide reads, in one-letter code: TelA-like protein SAB1262 (378 aa).

This sequence belongs to the TelA family.

The sequence is that of TelA-like protein SAB1262 from Staphylococcus aureus (strain bovine RF122 / ET3-1).